A 344-amino-acid chain; its full sequence is Lysophosphatidic acid receptor 6 (344 aa).

Topologically, residues 1-25 (MVSSNGSQCPYDDSFKYTLYGCMFS) are extracellular. Asn5 carries an N-linked (GlcNAc...) asparagine glycan. Residues 26 to 46 (MVFVLGLISNCVAIYIFICAL) traverse the membrane as a helical segment. Over 47–56 (KVRNETTTYM) the chain is Cytoplasmic. The chain crosses the membrane as a helical span at residues 57 to 77 (INLAMSDLLFVFTLPFRIFYF). At 78 to 90 (ATRNWPFGDLLCK) the chain is on the extracellular side. A disulfide bridge links Cys89 with Cys168. Residues 91 to 111 (ISVMLFYTNMYGSILFLTCIS) traverse the membrane as a helical segment. The Cytoplasmic portion of the chain corresponds to 112-134 (VDRFLAIVYPFKSKTLRTKRNAK). The chain crosses the membrane as a helical span at residues 135–155 (IVCIAVWFTVMGGSAPAVFFQ). The Extracellular portion of the chain corresponds to 156–183 (STHSQGNNTSEACFENFPAATWKTYLSR). Asn162 and Asn163 each carry an N-linked (GlcNAc...) asparagine glycan. Residues 184-204 (IVIFIEIVGFFIPLILNVTCS) form a helical membrane-spanning segment. At 205 to 230 (SMVLRTLNKPVTLSRSKMNKTKVLKM) the chain is on the cytoplasmic side. Residues 231–251 (IFVHLVIFCFCFVPYNINLIL) traverse the membrane as a helical segment. Topologically, residues 252–272 (YSLMRTQTFVNCSVVAAVRTM) are extracellular. An N-linked (GlcNAc...) asparagine glycan is attached at Asn262. A helical transmembrane segment spans residues 273–293 (YPITLCIAVSNCCFDPIVYYF). A lipid anchor (S-palmitoyl cysteine) is attached at Cys284. The Cytoplasmic segment spans residues 294-344 (TSDTIQNSIKMKNWSVRRSDSRFSEVQGTENFIQHNLQTLKNKIFDNESAI).

This sequence belongs to the G-protein coupled receptor 1 family. As to expression, ubiquitously expressed. Detected in the hair follicles and skin (at protein level).

The protein localises to the cell membrane. Functionally, binds to oleoyl-L-alpha-lysophosphatidic acid (LPA). Intracellular cAMP is involved in the receptor activation. Important for the maintenance of hair growth and texture. In Mus musculus (Mouse), this protein is Lysophosphatidic acid receptor 6 (Lpar6).